Reading from the N-terminus, the 335-residue chain is Glucokinase (335 aa).

11–16 (ADIGGT) lines the ATP pocket.

Belongs to the bacterial glucokinase family.

It localises to the cytoplasm. It catalyses the reaction D-glucose + ATP = D-glucose 6-phosphate + ADP + H(+). This is Glucokinase from Xanthomonas campestris pv. campestris (strain 8004).